Consider the following 403-residue polypeptide: Phosphoglycerate kinase (403 aa).

Substrate is bound by residues 21-23, Arg-36, 59-62, Arg-119, and Arg-154; these read DFN and HLGR. ATP-binding positions include Lys-207, Gly-299, Glu-330, and 357–360; that span reads GGDA.

The protein belongs to the phosphoglycerate kinase family. As to quaternary structure, monomer.

The protein resides in the cytoplasm. It carries out the reaction (2R)-3-phosphoglycerate + ATP = (2R)-3-phospho-glyceroyl phosphate + ADP. It participates in carbohydrate degradation; glycolysis; pyruvate from D-glyceraldehyde 3-phosphate: step 2/5. This is Phosphoglycerate kinase from Chlamydia trachomatis serovar L2 (strain ATCC VR-902B / DSM 19102 / 434/Bu).